Reading from the N-terminus, the 361-residue chain is PTI1-like tyrosine-protein kinase 1 (361 aa).

The interval Glu-16–Glu-43 is disordered. A Protein kinase domain is found at Phe-68–Leu-350. ATP is bound by residues Ile-74–Val-82 and Lys-96. Residue Asp-200 is the Proton acceptor of the active site.

It belongs to the protein kinase superfamily. Tyr protein kinase family. As to quaternary structure, interacts with OXI1. Post-translationally, autophosphorylated and phosphorylated by OXI1.

The protein resides in the cell membrane. The catalysed reaction is L-tyrosyl-[protein] + ATP = O-phospho-L-tyrosyl-[protein] + ADP + H(+). This is PTI1-like tyrosine-protein kinase 1 (PTI11) from Arabidopsis thaliana (Mouse-ear cress).